Consider the following 104-residue polypeptide: L-rhamnose mutarotase (104 aa).

Substrate is bound at residue Tyr18. His22 functions as the Proton donor in the catalytic mechanism. Substrate contacts are provided by residues Tyr41 and 76–77 (WW). The interval 85–104 (PSNPDNSPISDALDPVFYLD) is disordered.

It belongs to the rhamnose mutarotase family. Homodimer.

The protein localises to the cytoplasm. It carries out the reaction alpha-L-rhamnose = beta-L-rhamnose. The protein operates within carbohydrate metabolism; L-rhamnose metabolism. Its function is as follows. Involved in the anomeric conversion of L-rhamnose. This Pectobacterium atrosepticum (strain SCRI 1043 / ATCC BAA-672) (Erwinia carotovora subsp. atroseptica) protein is L-rhamnose mutarotase.